The sequence spans 304 residues: Phosphatidylinositol mannoside acyltransferase (304 aa).

Catalysis depends on H126, which acts as the Proton acceptor. Positions 126 and 164 each coordinate hexadecanoyl-CoA. E200 is a catalytic residue. Hexadecanoyl-CoA is bound by residues S206 and E229.

Belongs to the LpxL/LpxM/LpxP family. As to quaternary structure, monomer.

It is found in the cell inner membrane. The enzyme catalyses a 2,6-O-bis(alpha-D-mannopyranosyl)-1-phosphatidyl-1D-myo-inositol + an acyl-CoA = a 2-O-(alpha-D-mannosyl)-6-O-(6-O-acyl-alpha-D-mannosyl)-1-phosphatidyl-1D-myo-inositol + CoA. The catalysed reaction is a 1,2-diacyl-sn-glycero-3-phospho-[alpha-D-mannopyranosyl-(1&lt;-&gt;6)-D-myo-inositol] + an acyl-CoA = a 1,2-diacyl-sn-glycero-3-phospho-[alpha-D-6-acyl-mannopyranosyl-(1&lt;-&gt;6)-D-myo-inositol] + CoA. The protein operates within phospholipid metabolism; phosphatidylinositol metabolism. Catalyzes the transfer of a palmitoyl moiety from palmitoyl-CoA to the 6-position of the mannose ring linked to the 2-position of myo-inositol in phosphatidyl-myo-inositol monomannoside (PIM1) or dimannoside (PIM2). The chain is Phosphatidylinositol mannoside acyltransferase from Mycolicibacterium smegmatis (strain ATCC 700084 / mc(2)155) (Mycobacterium smegmatis).